We begin with the raw amino-acid sequence, 147 residues long: Large ribosomal subunit protein uL13 (147 aa).

It belongs to the universal ribosomal protein uL13 family. In terms of assembly, part of the 50S ribosomal subunit.

Functionally, this protein is one of the early assembly proteins of the 50S ribosomal subunit, although it is not seen to bind rRNA by itself. It is important during the early stages of 50S assembly. In Mycobacterium marinum (strain ATCC BAA-535 / M), this protein is Large ribosomal subunit protein uL13.